The following is a 239-amino-acid chain: Small ribosomal subunit protein uS2 (239 aa).

It belongs to the universal ribosomal protein uS2 family.

This Parasynechococcus marenigrum (strain WH8102) protein is Small ribosomal subunit protein uS2.